Reading from the N-terminus, the 325-residue chain is Putative S-adenosyl-L-methionine-dependent methyltransferase MT0917 (325 aa).

S-adenosyl-L-methionine contacts are provided by residues D126 and 155 to 156; that span reads DL.

This sequence belongs to the UPF0677 family.

Its function is as follows. Exhibits S-adenosyl-L-methionine-dependent methyltransferase activity. The protein is Putative S-adenosyl-L-methionine-dependent methyltransferase MT0917 of Mycobacterium tuberculosis (strain CDC 1551 / Oshkosh).